A 286-amino-acid polypeptide reads, in one-letter code: 33 kDa chaperonin (286 aa).

Cystine bridges form between Cys-225–Cys-227 and Cys-258–Cys-261.

The protein belongs to the HSP33 family. In terms of processing, under oxidizing conditions two disulfide bonds are formed involving the reactive cysteines. Under reducing conditions zinc is bound to the reactive cysteines and the protein is inactive.

The protein localises to the cytoplasm. In terms of biological role, redox regulated molecular chaperone. Protects both thermally unfolding and oxidatively damaged proteins from irreversible aggregation. Plays an important role in the bacterial defense system toward oxidative stress. The sequence is that of 33 kDa chaperonin from Shewanella loihica (strain ATCC BAA-1088 / PV-4).